We begin with the raw amino-acid sequence, 367 residues long: 3-ketodihydrosphingosine reductase ksrA (367 aa).

Residues 12–32 (ASPATLGISLILCGFIVYSVS) form a helical membrane-spanning segment. Residues glycine 53, serine 55, glycine 57, arginine 78, lysine 82, aspartate 108, and leucine 109 each contribute to the NADPH site. Residues 53 to 57 (GGSDG) carry the GXSXG motif. The helical transmembrane segment at 193-213 (LIFTCSTLAFVSIAGYAPYSP) threads the bilayer. Tyrosine 211 functions as the Proton acceptor in the catalytic mechanism. NADP(+) contacts are provided by tyrosine 211, lysine 215, and isoleucine 259. Residue lysine 215 is the Lowers pKa of active site Tyr of the active site.

It belongs to the short-chain dehydrogenases/reductases (SDR) family.

The protein localises to the endoplasmic reticulum membrane. The catalysed reaction is sphinganine + NADP(+) = 3-oxosphinganine + NADPH + H(+). It functions in the pathway lipid metabolism; sphingolipid metabolism. Catalyzes the reduction of 3'-oxosphinganine (3-ketodihydrosphingosine/KDS) to sphinganine (dihydrosphingosine/DHS), the second step of de novo sphingolipid biosynthesis. The protein is 3-ketodihydrosphingosine reductase ksrA of Aspergillus fumigatus (strain ATCC MYA-4609 / CBS 101355 / FGSC A1100 / Af293) (Neosartorya fumigata).